A 97-amino-acid polypeptide reads, in one-letter code: UPF0235 protein APL_1380 (97 aa).

This sequence belongs to the UPF0235 family.

This is UPF0235 protein APL_1380 from Actinobacillus pleuropneumoniae serotype 5b (strain L20).